Consider the following 754-residue polypeptide: Elongation factor G-2, mitochondrial (754 aa).

Positions 63–340 (DKLRNIGISA…GVVSFLPSPN (278 aa)) constitute a tr-type G domain. GTP-binding positions include 72–79 (AHIDSGKT), 139–143 (DTPGH), and 193–196 (NKLD).

This sequence belongs to the TRAFAC class translation factor GTPase superfamily. Classic translation factor GTPase family. EF-G/EF-2 subfamily. Expressed in cotyledons and adult leaves at the same levels.

The protein resides in the mitochondrion. It participates in protein biosynthesis; polypeptide chain elongation. Functionally, mitochondrial GTPase that catalyzes the GTP-dependent ribosomal translocation step during translation elongation. During this step, the ribosome changes from the pre-translocational (PRE) to the post-translocational (POST) state as the newly formed A-site-bound peptidyl-tRNA and P-site-bound deacylated tRNA move to the P and E sites, respectively. Catalyzes the coordinated movement of the two tRNA molecules, the mRNA and conformational changes in the ribosome. In Arabidopsis thaliana (Mouse-ear cress), this protein is Elongation factor G-2, mitochondrial (MEFG2).